The primary structure comprises 453 residues: Sodium/alanine symporter AgcS (453 aa).

Residues 1-17 (MDFVSLVNTVNSFVWGP) lie on the Extracellular side of the membrane. Residues 18–32 (YMLVLLLGTGIFLTL) form a helical membrane-spanning segment. Over 33–67 (RLGFMQIHTLPYALKLAFSKHQDETSEGDISHFQA) the chain is Cytoplasmic. The chain crosses the membrane as a helical span at residues 68–89 (LMTALAATIGTGNIAGVATAYV). Thr75 lines the D-alanine pocket. Positions 75 and 79 each coordinate L-alanine. Asn80 contributes to the D-alanine binding site. Residues 90 to 92 (LGG) lie on the Extracellular side of the membrane. Residues 93–111 (PGAIFWMWVTAFFGMATKY) form a helical membrane-spanning segment. Residues 112 to 148 (AEAVLAIKYRTVDDNGEMAGGPMYFLEKGLPDHGLGK) are Cytoplasmic-facing. The chain crosses the membrane as a helical span at residues 149–179 (ILGVAFAFFGAFAAFGIGNMVQTNSVADAVA). A D-alanine-binding site is contributed by Gln170. Gln170 serves as a coordination point for L-alanine. At 180-186 (SNFGVDP) the chain is on the extracellular side. Residues 187–202 (LITGFVLAIFTAAVIL) traverse the membrane as a helical segment. The Cytoplasmic portion of the chain corresponds to 203–206 (GGIK). Residues 207-233 (SIGKATGIIVPFMAVFYILAGLVILAM) traverse the membrane as a helical segment. Over 234–258 (NIGYIIPAFGTIFSSAFNFSAGFGA) the chain is Extracellular. A helical membrane pass occupies residues 259-274 (LIGTAIMWGVKRGVFS). 273 to 274 (FS) provides a ligand contact to D-alanine. L-alanine is bound at residue 273–276 (FSNE). Residues 275–300 (NEAGLGSAPIAAAAAKTDHPGRQALV) lie on the Cytoplasmic side of the membrane. A helical transmembrane segment spans residues 301 to 322 (SMTGTFLDTIVVCTITGLVLTI). Over 323-350 (AGLKAFPGLTDLTGASLTAASFDALMPM) the chain is Extracellular. A helical transmembrane segment spans residues 351 to 378 (GGLIVTIGLVFFAYSTVLGWSYYGEKCF). Residues 379–386 (EYLIGTKG) are Cytoplasmic-facing. A helical transmembrane segment spans residues 387 to 403 (IRLYRIAFVLVAFWGAT). Over 404 to 408 (ASLPL) the chain is Extracellular. Residues 409–430 (VWNIADTLNGAMAIPNLIGLLL) form a helical membrane-spanning segment. Residues 431–453 (LSGVVVSETKAFNEIRKNEAKNA) lie on the Cytoplasmic side of the membrane.

It belongs to the alanine or glycine:cation symporter (AGCS) (TC 2.A.25) family.

Its subcellular location is the cell membrane. The catalysed reaction is D-alanine(in) + Na(+)(in) = D-alanine(out) + Na(+)(out). It carries out the reaction L-alanine(in) + Na(+)(in) = L-alanine(out) + Na(+)(out). The enzyme catalyses glycine(in) + Na(+)(in) = glycine(out) + Na(+)(out). Functionally, catalyzes the sodium-dependent uptake of extracellular D-alanine and L-alanine. Can also transport glycine. Binds glycine and both enantiomers of alanine, while strictly excluding other amino acids. This Methanococcus maripaludis (strain DSM 14266 / JCM 13030 / NBRC 101832 / S2 / LL) protein is Sodium/alanine symporter AgcS.